The sequence spans 445 residues: Putative H/ACA ribonucleoprotein complex subunit 4 (445 aa).

The segment at 1–32 (MGKKDKRSKLEGDELAEAQQKGSFQLPSSNET) is disordered. A compositionally biased stretch (polar residues) spans 20–32 (QKGSFQLPSSNET). D113 (nucleophile) is an active-site residue. The region spanning 284-359 (HKRVVVKDSC…IVAKSKRVIM (76 aa)) is the PUA domain. Residues 407-445 (TDKVKKEQEDKEDEEEEEAPKKKSKKAAKKEVSSSSDSE) form a disordered region.

Belongs to the pseudouridine synthase TruB family. As to quaternary structure, component of the small nucleolar ribonucleoprotein particle containing H/ACA-type snoRNAs (H/ACA snoRNPs).

The protein localises to the nucleus. The protein resides in the nucleolus. The enzyme catalyses a uridine in RNA = a pseudouridine in RNA. Functionally, plays a central role in ribosomal RNA processing. Probable catalytic subunit of H/ACA small nucleolar ribonucleoprotein (H/ACA snoRNP) complex, which catalyzes pseudouridylation of rRNA. This involves the isomerization of uridine such that the ribose is subsequently attached to C5, instead of the normal N1. Pseudouridine ('psi') residues may serve to stabilize the conformation of rRNAs. This chain is Putative H/ACA ribonucleoprotein complex subunit 4, found in Caenorhabditis briggsae.